The primary structure comprises 103 residues: Large ribosomal subunit protein uL24 (103 aa).

This sequence belongs to the universal ribosomal protein uL24 family. As to quaternary structure, part of the 50S ribosomal subunit.

Functionally, one of two assembly initiator proteins, it binds directly to the 5'-end of the 23S rRNA, where it nucleates assembly of the 50S subunit. In terms of biological role, one of the proteins that surrounds the polypeptide exit tunnel on the outside of the subunit. This chain is Large ribosomal subunit protein uL24, found in Haemophilus influenzae (strain ATCC 51907 / DSM 11121 / KW20 / Rd).